A 146-amino-acid chain; its full sequence is MAYAYRRTIHLADTDAAGVVYFAQLLHICHEAYEICLIGNGMDWSGLLREGTVALPIVHSAIDFLRPITWGDRLDIQLYPELENSRQFKISYRIFKENQDSPPESPLATALTRHVAINPRTRQRCSLPPVVETWLRNAPKIEDSKI.

Asp15 is an active-site residue.

Belongs to the 4-hydroxybenzoyl-CoA thioesterase family. DHNA-CoA hydrolase subfamily.

The catalysed reaction is 1,4-dihydroxy-2-naphthoyl-CoA + H2O = 1,4-dihydroxy-2-naphthoate + CoA + H(+). Its pathway is cofactor biosynthesis; phylloquinone biosynthesis. It functions in the pathway quinol/quinone metabolism; 1,4-dihydroxy-2-naphthoate biosynthesis; 1,4-dihydroxy-2-naphthoate from chorismate: step 7/7. Its function is as follows. Catalyzes the hydrolysis of 1,4-dihydroxy-2-naphthoyl-CoA (DHNA-CoA) to 1,4-dihydroxy-2-naphthoate (DHNA), a reaction involved in phylloquinone (vitamin K1) biosynthesis. In Picosynechococcus sp. (strain ATCC 27264 / PCC 7002 / PR-6) (Agmenellum quadruplicatum), this protein is 1,4-dihydroxy-2-naphthoyl-CoA hydrolase.